The chain runs to 202 residues: Nucleoside triphosphate pyrophosphatase (202 aa).

Aspartate 79 (proton acceptor) is an active-site residue.

Belongs to the Maf family. The cofactor is a divalent metal cation.

The protein localises to the cytoplasm. It carries out the reaction a ribonucleoside 5'-triphosphate + H2O = a ribonucleoside 5'-phosphate + diphosphate + H(+). It catalyses the reaction a 2'-deoxyribonucleoside 5'-triphosphate + H2O = a 2'-deoxyribonucleoside 5'-phosphate + diphosphate + H(+). Nucleoside triphosphate pyrophosphatase. May have a dual role in cell division arrest and in preventing the incorporation of modified nucleotides into cellular nucleic acids. The chain is Nucleoside triphosphate pyrophosphatase from Rhodospirillum rubrum (strain ATCC 11170 / ATH 1.1.1 / DSM 467 / LMG 4362 / NCIMB 8255 / S1).